Reading from the N-terminus, the 390-residue chain is Lipid droplet-regulating VLDL assembly factor AUP1 homolog (390 aa).

The Cytoplasmic segment spans residues 1–32 (MASPEASSSGNTEDLRIEDLFHQKRNEDTIAK). Residues 33–53 (IFSIIYAPVGLIILLIRVFLG) lie within the membrane without spanning it. Residues 54-390 (FHTFIVACLL…NRQKYMNRDS (337 aa)) lie on the Cytoplasmic side of the membrane. Positions 305 to 347 (QMDECAMRIKQSFPSFHLSAIRRDLEKTRSQTTTVNNLKAGKI) constitute a CUE domain.

Belongs to the AUP1 family.

It localises to the endoplasmic reticulum membrane. The protein localises to the lipid droplet. This chain is Lipid droplet-regulating VLDL assembly factor AUP1 homolog, found in Caenorhabditis elegans.